The sequence spans 456 residues: UDP-N-acetylmuramoylalanine--D-glutamate ligase (456 aa).

113-119 is a binding site for ATP; that stretch reads GTNGKTT.

It belongs to the MurCDEF family.

The protein localises to the cytoplasm. The catalysed reaction is UDP-N-acetyl-alpha-D-muramoyl-L-alanine + D-glutamate + ATP = UDP-N-acetyl-alpha-D-muramoyl-L-alanyl-D-glutamate + ADP + phosphate + H(+). It functions in the pathway cell wall biogenesis; peptidoglycan biosynthesis. Cell wall formation. Catalyzes the addition of glutamate to the nucleotide precursor UDP-N-acetylmuramoyl-L-alanine (UMA). The sequence is that of UDP-N-acetylmuramoylalanine--D-glutamate ligase from Crocosphaera subtropica (strain ATCC 51142 / BH68) (Cyanothece sp. (strain ATCC 51142)).